Reading from the N-terminus, the 111-residue chain is Small ribosomal subunit protein uS15c (111 aa).

Belongs to the universal ribosomal protein uS15 family. Part of the 30S ribosomal subunit.

The protein localises to the plastid. It localises to the chloroplast. This chain is Small ribosomal subunit protein uS15c (rps15), found in Staurastrum punctulatum (Green alga).